The following is a 47-amino-acid chain: Small, acid-soluble spore protein N (47 aa).

Residues 1–47 are disordered; sequence MSNPRGNPKYFNPNHLGTQPRAAGGNKGKKMQDQSGQHAQVIQTKGE. A compositionally biased stretch (polar residues) spans 33–47; sequence DQSGQHAQVIQTKGE.

It belongs to the SspN family.

It localises to the spore core. This chain is Small, acid-soluble spore protein N, found in Geobacillus sp. (strain WCH70).